Consider the following 465-residue polypeptide: UDP-N-acetylmuramate--L-alanine ligase (465 aa).

An ATP-binding site is contributed by 115-121; sequence GAHGKTT.

It belongs to the MurCDEF family.

Its subcellular location is the cytoplasm. It catalyses the reaction UDP-N-acetyl-alpha-D-muramate + L-alanine + ATP = UDP-N-acetyl-alpha-D-muramoyl-L-alanine + ADP + phosphate + H(+). The protein operates within cell wall biogenesis; peptidoglycan biosynthesis. Functionally, cell wall formation. The polypeptide is UDP-N-acetylmuramate--L-alanine ligase (Coxiella burnetii (strain Dugway 5J108-111)).